The following is a 314-amino-acid chain: uncharacterized protein (314 aa).

Positions 1–26 are cleaved as a signal peptide; that stretch reads MRGRVAGSCAPLGLLLVCLRLPGLFA. Residues 41-60 show a composition bias toward polar residues; the sequence is GTNLPQLGQPSLTGPPNSEH. Disordered regions lie at residues 41–65, 77–96, 147–191, and 292–314; these read GTNL…QPAL, LKLS…SAVQ, GSGP…GKIL, and PPGS…LQWG. A compositionally biased stretch (low complexity) spans 147–157; sequence GSGPLPGESSP. A compositionally biased stretch (basic and acidic residues) spans 167–177; the sequence is SHLHQDSESRR. The segment covering 303–314 has biased composition (pro residues); sequence FPNPPSPGLQWG.

In terms of assembly, binds to numerous extracellular matrix proteins. As to expression, taste cell specific.

Its subcellular location is the secreted. The protein resides in the extracellular space. It is found in the extracellular matrix. This is an uncharacterized protein from Macaca mulatta (Rhesus macaque).